Here is a 521-residue protein sequence, read N- to C-terminus: MVVAMATKEEEGGPSSRVPHLPWMRNPVDIDSFSGCPVAHLPRLDPRLVKPLQRMGIESFFPVQVAAWLETIGPGAFERDICINSPTGSGKTLAYALPIVQMLATRKVRCLRALVVLPTRDLALQVKEVFDAIAPVVGLSVGSAVGQSSIADEVSNLIEKSKQGLFPSLDEEYIQMEPQTKVDILVATPGRLMDHISMTKGFSLEHLQYLVVDETDRMLREAYQSWLPTVIQLTRSSDQNHSWSDMNGETLLHPLTTIRRSGVERGFKGKSFPRLAKIVLSATLTQDPSKLSQLELQHPLLLNSGKKRYRIPTKLQSYKLVCKSNLKPLSLIVLLQELRGEKCLVFTSSVESSHRLSTLLEFFEDLPFKFSEYSRLQRESTRRKTLDAFKEGKIDVLIGTDRMARGIHIDGLRYVINYDMPPYVKTYIHRAGRTARAGESGSCFTFLRKHEVKAFDKMLKKADNSSCSLHSLPEESVETLRPVFSSALKKLEESLESEATKKSKSGDKAPNASKRKRTINT.

Residues 1–20 (MVVAMATKEEEGGPSSRVPH) form a disordered region. Positions 36 to 65 (CPVAHLPRLDPRLVKPLQRMGIESFFPVQV) match the Q motif motif. The Helicase ATP-binding domain maps to 72-302 (IGPGAFERDI…QLELQHPLLL (231 aa)). 85 to 92 (SPTGSGKT) is an ATP binding site. Residues 213–216 (DETD) carry the DEAD box motif. Positions 330 to 480 (SLIVLLQELR…SLPEESVETL (151 aa)) constitute a Helicase C-terminal domain. Residues 495 to 507 (LESEATKKSKSGD) are compositionally biased toward basic and acidic residues. The segment at 495–521 (LESEATKKSKSGDKAPNASKRKRTINT) is disordered.

The protein belongs to the DEAD box helicase family. DDX51/DBP6 subfamily.

It catalyses the reaction ATP + H2O = ADP + phosphate + H(+). The sequence is that of DEAD-box ATP-dependent RNA helicase 1 from Oryza sativa subsp. japonica (Rice).